We begin with the raw amino-acid sequence, 283 residues long: MLRIAIQTKGRMHEKTAVLLNEVGIRLPAAKRTLLIQSNTFPAEILFLRDDDIPQAVANGVADVGIVGENEFHEKKQEAIVIKQLGFSHCRLSLAIPKEEEYPGLHWFFKKKIATSYPKILSAFLKKNAIEADIHFINGSVEISPGIGLSDAIFDIVSSGSTLISNHLKEVEIVMYSEAILISNKKLDEKKNKILQELIFRIDAVQTANDKKYILLNAPNDSLQEIFQILPGMKSPTIFPLAKKGWSSIHSVISEKQSWEIINKLKNAGAEGILIVPIEKMIL.

Belongs to the ATP phosphoribosyltransferase family. Long subfamily. Requires Mg(2+) as cofactor.

The protein resides in the cytoplasm. The catalysed reaction is 1-(5-phospho-beta-D-ribosyl)-ATP + diphosphate = 5-phospho-alpha-D-ribose 1-diphosphate + ATP. It functions in the pathway amino-acid biosynthesis; L-histidine biosynthesis; L-histidine from 5-phospho-alpha-D-ribose 1-diphosphate: step 1/9. With respect to regulation, feedback inhibited by histidine. In terms of biological role, catalyzes the condensation of ATP and 5-phosphoribose 1-diphosphate to form N'-(5'-phosphoribosyl)-ATP (PR-ATP). Has a crucial role in the pathway because the rate of histidine biosynthesis seems to be controlled primarily by regulation of HisG enzymatic activity. The sequence is that of ATP phosphoribosyltransferase from Azobacteroides pseudotrichonymphae genomovar. CFP2.